The following is a 180-amino-acid chain: Crossover junction endodeoxyribonuclease RuvC (180 aa).

Residues D7, E66, and D138 contribute to the active site. Residues D7, E66, and D138 each contribute to the Mg(2+) site.

This sequence belongs to the RuvC family. As to quaternary structure, homodimer which binds Holliday junction (HJ) DNA. The HJ becomes 2-fold symmetrical on binding to RuvC with unstacked arms; it has a different conformation from HJ DNA in complex with RuvA. In the full resolvosome a probable DNA-RuvA(4)-RuvB(12)-RuvC(2) complex forms which resolves the HJ. Mg(2+) serves as cofactor.

It is found in the cytoplasm. The catalysed reaction is Endonucleolytic cleavage at a junction such as a reciprocal single-stranded crossover between two homologous DNA duplexes (Holliday junction).. The RuvA-RuvB-RuvC complex processes Holliday junction (HJ) DNA during genetic recombination and DNA repair. Endonuclease that resolves HJ intermediates. Cleaves cruciform DNA by making single-stranded nicks across the HJ at symmetrical positions within the homologous arms, yielding a 5'-phosphate and a 3'-hydroxyl group; requires a central core of homology in the junction. The consensus cleavage sequence is 5'-(A/T)TT(C/G)-3'. Cleavage occurs on the 3'-side of the TT dinucleotide at the point of strand exchange. HJ branch migration catalyzed by RuvA-RuvB allows RuvC to scan DNA until it finds its consensus sequence, where it cleaves and resolves the cruciform DNA. This Burkholderia vietnamiensis (strain G4 / LMG 22486) (Burkholderia cepacia (strain R1808)) protein is Crossover junction endodeoxyribonuclease RuvC.